Here is a 189-residue protein sequence, read N- to C-terminus: dCTP deaminase (189 aa).

DCTP-binding positions include 112-117 (KSTYAR), 136-138 (TLE), Gln-157, Tyr-171, and Gln-181. The active-site Proton donor/acceptor is Glu-138.

The protein belongs to the dCTP deaminase family. As to quaternary structure, homotrimer.

It catalyses the reaction dCTP + H2O + H(+) = dUTP + NH4(+). Its pathway is pyrimidine metabolism; dUMP biosynthesis; dUMP from dCTP (dUTP route): step 1/2. In terms of biological role, catalyzes the deamination of dCTP to dUTP. This chain is dCTP deaminase, found in Xanthomonas campestris pv. campestris (strain 8004).